A 498-amino-acid chain; its full sequence is N-acyl-D-aspartate deacylase (498 aa).

The interval alanine 478–glutamate 498 is disordered.

It belongs to the metallo-dependent hydrolases superfamily. N-acyl-D-amino-acid deacylase family. Zn(2+) serves as cofactor.

The protein localises to the cytoplasm. The catalysed reaction is an N-acyl-D-aspartate + H2O = D-aspartate + a carboxylate. The polypeptide is N-acyl-D-aspartate deacylase (Alcaligenes xylosoxydans xylosoxydans (Achromobacter xylosoxidans)).